A 1183-amino-acid chain; its full sequence is Atrophin-1 (1183 aa).

3 disordered regions span residues 1-603 (MKTR…ITTS), 617-760 (SPAG…ARFN), and 780-855 (LEGS…HRPP). A Nuclear localization signal motif is present at residues 16–32 (RKKEAPGPREELRSRGR). A compositionally biased stretch (basic and acidic residues) spans 17 to 29 (KKEAPGPREELRS). Phosphoserine is present on S34. Over residues 45 to 63 (GKAEKSRQTAKKARVEETS) the composition is skewed to basic and acidic residues. Residues S77, S79, S100, S102, and S106 each carry the phosphoserine modification. The span at 107-127 (LDGRSINDDGSSDPRDIDQDN) shows a compositional bias: basic and acidic residues. The segment covering 128–151 (RSTSPSIYSPGSVENDSDSSSGLS) has biased composition (polar residues). 2 stretches are compositionally biased toward pro residues: residues 157-173 (PYHP…PPDS) and 207-218 (GPPPGAPPPHPQ). Over residues 261–272 (IPISSSGASGAP) the composition is skewed to low complexity. The segment covering 344–373 (PPGPEKGPTLAPSPHPLPPASSSAPGPPMR) has biased composition (pro residues). Over residues 377–400 (SSCSSSSVAASSSSSAATSQYPAS) the composition is skewed to low complexity. Residues 415–436 (SMSVSNQPPKYTQPSLPSQAVW) show a composition bias toward polar residues. An involved in binding BAIAP2 region spans residues 510 to 560 (HPLESSNSHHAHPYNMSPSLGSLRPYPPGPAHLPPSHGQVSYSQAGPNGPP). Residues 562–584 (SSSSNSSGSSSQAAYSCSHPSSS) show a composition bias toward low complexity. S625 carries the post-translational modification Phosphoserine. K634 carries the post-translational modification N6-acetyllysine. A Phosphothreonine modification is found at T646. Residue S654 is modified to Phosphoserine. At T662 the chain carries Phosphothreonine. Pro residues-rich tracts occupy residues 701–711 (LPPPPAAPTTG) and 732–745 (SPVP…PPPK). S732 bears the Phosphoserine; by MAPK8 mark. 2 positions are modified to phosphoserine: S739 and S741. Over residues 788 to 832 (KRADLVEKVRREAEQRAREEKEREREREREKEREREKERELERSV) the composition is skewed to basic and acidic residues. Positions 872-887 (DTPALRTLSEYARPHV) are required for interaction with FAT1. Residue S889 is modified to Phosphoserine. Residues 921-940 (PAAREREREARERDLRDRLK) form a disordered region. Residues 922–940 (AAREREREARERDLRDRLK) show a composition bias toward basic and acidic residues. The Nuclear export signal signature appears at 1026–1034 (ALGNDPLAR). R1108 carries the asymmetric dimethylarginine modification. K1176 participates in a covalent cross-link: Glycyl lysine isopeptide (Lys-Gly) (interchain with G-Cter in SUMO2).

As to quaternary structure, interacts with NR2E1; the interaction represses the transcriptional activity of NR2E1. Interact (via its N-terminus) with FAT1 (via a C-terminal domain). Interacts with BAIAP2, WWP1, WWP2, WWP3 and RERE. Interacts (via its N-terminus) with MTG8; the interaction enhances transcriptional repression of MTG8. Interacts with PQBP1. In terms of processing, phosphorylated in vitro by MAPK8/JNK1 on Ser-732. In terms of tissue distribution, predominant neuronal expression, Expressed in most brain regions including striatum, hippocampus, cerebral cortex, diencephalon, brain stem and cerebellum. Highest levels in cerebellum. Also highly expressed in kidney and testis, low expression in skeletal muscle and heart.

It is found in the nucleus. It localises to the cytoplasm. The protein resides in the perinuclear region. Its subcellular location is the cell junction. Functionally, transcriptional corepressor. Recruits NR2E1 to repress transcription. Promotes vascular smooth cell (VSMC) migration and orientation. Corepressor of MTG8 transcriptional repression. Has some intrinsic repression activity. The polypeptide is Atrophin-1 (Atn1) (Rattus norvegicus (Rat)).